The chain runs to 190 residues: Protein GrpE (190 aa).

The span at 1 to 11 (MSNQDEPQNSP) shows a compositional bias: polar residues. The tract at residues 1–36 (MSNQDEPQNSPEEFAEDQQADVALEEASSDSSETAA) is disordered. A compositionally biased stretch (acidic residues) spans 13–28 (EFAEDQQADVALEEAS).

This sequence belongs to the GrpE family. Homodimer.

It localises to the cytoplasm. Functionally, participates actively in the response to hyperosmotic and heat shock by preventing the aggregation of stress-denatured proteins, in association with DnaK and GrpE. It is the nucleotide exchange factor for DnaK and may function as a thermosensor. Unfolded proteins bind initially to DnaJ; upon interaction with the DnaJ-bound protein, DnaK hydrolyzes its bound ATP, resulting in the formation of a stable complex. GrpE releases ADP from DnaK; ATP binding to DnaK triggers the release of the substrate protein, thus completing the reaction cycle. Several rounds of ATP-dependent interactions between DnaJ, DnaK and GrpE are required for fully efficient folding. This Teredinibacter turnerae (strain ATCC 39867 / T7901) protein is Protein GrpE.